The chain runs to 218 residues: Small ribosomal subunit protein uS3c (218 aa).

Residues 47 to 118 (VQKNMKTSSG…KLNIAITRIE (72 aa)) enclose the KH type-2 domain.

This sequence belongs to the universal ribosomal protein uS3 family. Part of the 30S ribosomal subunit.

The protein resides in the plastid. It is found in the chloroplast. The chain is Small ribosomal subunit protein uS3c (rps3) from Helianthus annuus (Common sunflower).